The sequence spans 99 residues: MNKTEFIAFMTEHGHNNKHAAHKTLTKADAEKALNLVIESVISAIKSKHNVNLTGFGSFEIHHRKEREGRNPKTGAKMKIDAYNQPTFRAGRKLKEACN.

The interval 63–82 (HRKEREGRNPKTGAKMKIDA) is disordered.

It belongs to the bacterial histone-like protein family. As to quaternary structure, homodimer.

Functionally, histone-like DNA-binding protein which is capable of wrapping DNA to stabilize it, and thus to prevent its denaturation under extreme environmental conditions. This chain is DNA-binding protein HU (hup), found in Rickettsia prowazekii (strain Madrid E).